The following is a 373-amino-acid chain: tRNA N6-adenosine threonylcarbamoyltransferase (373 aa).

The a divalent metal cation site is built by His128, His132, and Tyr149. Residues 149 to 153, Asp181, Gly196, Glu200, and Asn302 each bind substrate; that span reads YVSGG. Residue Asp331 participates in a divalent metal cation binding.

The protein belongs to the KAE1 / TsaD family. As to quaternary structure, component of the EKC/KEOPS complex composed of at least BUD32, CGI121, GON7, KAE1 and PCC1; the whole complex dimerizes. The cofactor is a divalent metal cation.

Its subcellular location is the cytoplasm. It localises to the nucleus. It catalyses the reaction L-threonylcarbamoyladenylate + adenosine(37) in tRNA = N(6)-L-threonylcarbamoyladenosine(37) in tRNA + AMP + H(+). In terms of biological role, component of the EKC/KEOPS complex that is required for the formation of a threonylcarbamoyl group on adenosine at position 37 (t(6)A37) in tRNAs that read codons beginning with adenine. The complex is probably involved in the transfer of the threonylcarbamoyl moiety of threonylcarbamoyl-AMP (TC-AMP) to the N6 group of A37. KAE1 likely plays a direct catalytic role in this reaction, but requires other protein(s) of the complex to fulfill this activity. The EKC/KEOPS complex also promotes both telomere uncapping and telomere elongation. The complex is required for efficient recruitment of transcriptional coactivators. This is tRNA N6-adenosine threonylcarbamoyltransferase from Candida glabrata (strain ATCC 2001 / BCRC 20586 / JCM 3761 / NBRC 0622 / NRRL Y-65 / CBS 138) (Yeast).